Consider the following 435-residue polypeptide: Kynurenine--oxoglutarate transaminase (435 aa).

Substrate is bound by residues Gly-46 and Asn-198. Lys-262 is modified (N6-(pyridoxal phosphate)lysine). Arg-413 is a substrate binding site.

This sequence belongs to the class-I pyridoxal-phosphate-dependent aminotransferase family. In terms of assembly, homodimer. Pyridoxal 5'-phosphate is required as a cofactor.

It localises to the cytoplasm. It carries out the reaction L-kynurenine + 2-oxoglutarate = kynurenate + L-glutamate + H2O. The catalysed reaction is 3-phenylpyruvate + L-glutamine = 2-oxoglutaramate + L-phenylalanine. The enzyme catalyses an S-substituted L-cysteine + H2O = a thiol + pyruvate + NH4(+). Its pathway is amino-acid degradation; L-kynurenine degradation; kynurenate from L-kynurenine: step 1/2. Its function is as follows. Catalyzes the irreversible transamination of the L-tryptophan metabolite L-kynurenine to form kynurenic acid (KA). Metabolizes the cysteine conjugates of certain halogenated alkenes and alkanes to form reactive metabolites. Catalyzes the beta-elimination of S-conjugates and Se-conjugates of L-(seleno)cysteine, resulting in the cleavage of the C-S or C-Se bond. The polypeptide is Kynurenine--oxoglutarate transaminase (ccbl) (Dictyostelium discoideum (Social amoeba)).